Here is a 311-residue protein sequence, read N- to C-terminus: L-lactate dehydrogenase 2 (311 aa).

The NAD(+) site is built by Val14, Asp35, and Arg40. Substrate is bound by residues Arg90 and Asn122–Asp125. NAD(+) is bound by residues Ala120–Asn122 and Thr145. Asp150–Arg153 is a substrate binding site. His177 serves as the catalytic Proton acceptor. A substrate-binding site is contributed by Thr230.

Belongs to the LDH/MDH superfamily. LDH family. Homotetramer.

It localises to the cytoplasm. The enzyme catalyses (S)-lactate + NAD(+) = pyruvate + NADH + H(+). Its pathway is fermentation; pyruvate fermentation to lactate; (S)-lactate from pyruvate: step 1/1. Functionally, catalyzes the conversion of lactate to pyruvate. The sequence is that of L-lactate dehydrogenase 2 from Listeria monocytogenes serovar 1/2a (strain ATCC BAA-679 / EGD-e).